The following is a 162-amino-acid chain: Globin CTT-VIIB-7 (162 aa).

A signal peptide spans 1–16 (MKFFAVLALCVVGAIA). The Globin domain maps to 18 to 162 (PLSADEANLV…TYAVALKSLE (145 aa)). Residues histidine 76 and histidine 111 each contribute to the heme b site.

The protein belongs to the globin family. In terms of assembly, homodimer.

This is Globin CTT-VIIB-7 (CTT-7B7) from Chironomus thummi piger (Midge).